The following is a 243-amino-acid chain: Biosynthetic peptidoglycan transglycosylase (243 aa).

Residues 21-43 (LLIVSLVSALMSVLQVIVFRFVD) traverse the membrane as a helical segment.

It belongs to the glycosyltransferase 51 family.

It is found in the cell inner membrane. The enzyme catalyses [GlcNAc-(1-&gt;4)-Mur2Ac(oyl-L-Ala-gamma-D-Glu-L-Lys-D-Ala-D-Ala)](n)-di-trans,octa-cis-undecaprenyl diphosphate + beta-D-GlcNAc-(1-&gt;4)-Mur2Ac(oyl-L-Ala-gamma-D-Glu-L-Lys-D-Ala-D-Ala)-di-trans,octa-cis-undecaprenyl diphosphate = [GlcNAc-(1-&gt;4)-Mur2Ac(oyl-L-Ala-gamma-D-Glu-L-Lys-D-Ala-D-Ala)](n+1)-di-trans,octa-cis-undecaprenyl diphosphate + di-trans,octa-cis-undecaprenyl diphosphate + H(+). Its pathway is cell wall biogenesis; peptidoglycan biosynthesis. Peptidoglycan polymerase that catalyzes glycan chain elongation from lipid-linked precursors. The sequence is that of Biosynthetic peptidoglycan transglycosylase from Xylella fastidiosa (strain M12).